Consider the following 142-residue polypeptide: Transcriptional regulator MraZ (142 aa).

SpoVT-AbrB domains lie at 5 to 51 (ASAL…PRPE) and 77 to 120 (AMDV…DAQT).

It belongs to the MraZ family. In terms of assembly, forms oligomers.

It is found in the cytoplasm. The protein resides in the nucleoid. In Paraburkholderia phytofirmans (strain DSM 17436 / LMG 22146 / PsJN) (Burkholderia phytofirmans), this protein is Transcriptional regulator MraZ.